We begin with the raw amino-acid sequence, 323 residues long: Lipoyl synthase (323 aa).

The [4Fe-4S] cluster site is built by cysteine 53, cysteine 58, cysteine 64, cysteine 79, cysteine 83, cysteine 86, and serine 293. A Radical SAM core domain is found at 65–282; it reads WTKKQATVMI…AATARAKGFS (218 aa).

The protein belongs to the radical SAM superfamily. Lipoyl synthase family. It depends on [4Fe-4S] cluster as a cofactor.

Its subcellular location is the cytoplasm. The catalysed reaction is [[Fe-S] cluster scaffold protein carrying a second [4Fe-4S](2+) cluster] + N(6)-octanoyl-L-lysyl-[protein] + 2 oxidized [2Fe-2S]-[ferredoxin] + 2 S-adenosyl-L-methionine + 4 H(+) = [[Fe-S] cluster scaffold protein] + N(6)-[(R)-dihydrolipoyl]-L-lysyl-[protein] + 4 Fe(3+) + 2 hydrogen sulfide + 2 5'-deoxyadenosine + 2 L-methionine + 2 reduced [2Fe-2S]-[ferredoxin]. It functions in the pathway protein modification; protein lipoylation via endogenous pathway; protein N(6)-(lipoyl)lysine from octanoyl-[acyl-carrier-protein]: step 2/2. Its function is as follows. Catalyzes the radical-mediated insertion of two sulfur atoms into the C-6 and C-8 positions of the octanoyl moiety bound to the lipoyl domains of lipoate-dependent enzymes, thereby converting the octanoylated domains into lipoylated derivatives. The chain is Lipoyl synthase from Zymomonas mobilis subsp. mobilis (strain ATCC 31821 / ZM4 / CP4).